Consider the following 491-residue polypeptide: Proline--tRNA ligase (491 aa).

Belongs to the class-II aminoacyl-tRNA synthetase family. ProS type 3 subfamily. As to quaternary structure, homodimer.

It is found in the cytoplasm. It carries out the reaction tRNA(Pro) + L-proline + ATP = L-prolyl-tRNA(Pro) + AMP + diphosphate. Catalyzes the attachment of proline to tRNA(Pro) in a two-step reaction: proline is first activated by ATP to form Pro-AMP and then transferred to the acceptor end of tRNA(Pro). This chain is Proline--tRNA ligase, found in Amoebophilus asiaticus (strain 5a2).